We begin with the raw amino-acid sequence, 387 residues long: LL-diaminopimelate aminotransferase (387 aa).

Substrate contacts are provided by tyrosine 14 and glycine 39. Pyridoxal 5'-phosphate contacts are provided by residues tyrosine 68, 102-103 (SK), tyrosine 127, asparagine 177, tyrosine 208, and 236-238 (SLS). Lysine 103, tyrosine 127, and asparagine 177 together coordinate substrate. Residue lysine 239 is modified to N6-(pyridoxal phosphate)lysine. Position 247 (arginine 247) interacts with pyridoxal 5'-phosphate. Arginine 365 provides a ligand contact to substrate.

This sequence belongs to the class-I pyridoxal-phosphate-dependent aminotransferase family. LL-diaminopimelate aminotransferase subfamily. As to quaternary structure, homodimer. Pyridoxal 5'-phosphate is required as a cofactor.

It catalyses the reaction (2S,6S)-2,6-diaminopimelate + 2-oxoglutarate = (S)-2,3,4,5-tetrahydrodipicolinate + L-glutamate + H2O + H(+). The protein operates within amino-acid biosynthesis; L-lysine biosynthesis via DAP pathway; LL-2,6-diaminopimelate from (S)-tetrahydrodipicolinate (aminotransferase route): step 1/1. Its function is as follows. Involved in the synthesis of meso-diaminopimelate (m-DAP or DL-DAP), required for both lysine and peptidoglycan biosynthesis. Catalyzes the direct conversion of tetrahydrodipicolinate to LL-diaminopimelate. In Aquifex aeolicus (strain VF5), this protein is LL-diaminopimelate aminotransferase.